The primary structure comprises 473 residues: MTKGRVIQVMGPVVDVKFENGHLPAIYNALKIQHKARNENEVDIDLTLEVALHLGDDTVRTIAMASTDGLIRGMEVIDTGAPISVPVGEVTLGRVFNVLGEPIDMQGEIPDDARRDPIHRPAPKFEELATEVEILETGIKVVDLLAPYIKGGKIGLFGGAGVGKTVLIQELIHNIAQEHGGISVFAGVGERTREGNDLYHEMKDSGVISKTAMVFGQMNEPPGARMRVALTGLTMAEYFRDEQGQDVLLFIDNIFRFTQAGSEVSALLGRMPSAVGYQPTLATEMGQLQERITSTATGSITSIQAIYVPADDYTDPAPATTFSHLDATTNLERKLAEMGIYPAVDPLASTSRALAPEIVGEEHYQVARKVQQTLQRYRELQDIIAILGMDELSDEDKLIVHRARRIQFFLSQNFHVAEQFTGQPGSYVPIKETVRGFKEILEGKYDHIPEDAFRLVGRIEEVVEKAKQMGVEV.

158–165 is an ATP binding site; it reads GGAGVGKT.

The protein belongs to the ATPase alpha/beta chains family. As to quaternary structure, F-type ATPases have 2 components, CF(1) - the catalytic core - and CF(0) - the membrane proton channel. CF(1) has five subunits: alpha(3), beta(3), gamma(1), delta(1), epsilon(1). CF(0) has three main subunits: a(1), b(2) and c(9-12). The alpha and beta chains form an alternating ring which encloses part of the gamma chain. CF(1) is attached to CF(0) by a central stalk formed by the gamma and epsilon chains, while a peripheral stalk is formed by the delta and b chains.

It localises to the cell membrane. It carries out the reaction ATP + H2O + 4 H(+)(in) = ADP + phosphate + 5 H(+)(out). In terms of biological role, produces ATP from ADP in the presence of a proton gradient across the membrane. The catalytic sites are hosted primarily by the beta subunits. The sequence is that of ATP synthase subunit beta from Geobacillus sp. (strain WCH70).